A 454-amino-acid polypeptide reads, in one-letter code: Putative KilA-N domain-containing protein L4 (454 aa).

The span at 1–12 (MPQKTSKSKSSR) shows a compositional bias: basic residues. The disordered stretch occupies residues 1 to 159 (MPQKTSKSKS…DVPEEEYDDN (159 aa)). A compositionally biased stretch (basic and acidic residues) spans 14 to 64 (RYIEDSDDETRGRSRNRSIEKSRSRSLDKSQKKSRDKSLTRSRSKSPEKSK). Residues 65–79 (SRSKSLTRSRSKSPK) are compositionally biased toward basic residues. 2 stretches are compositionally biased toward acidic residues: residues 98 to 123 (YTTEESDEESDDESDGETNEESDEEL) and 130 to 158 (ESDEEISEESDEEISEESDEDVPEEEYDD). Residues 172-276 (EFARGKFGDF…LKVSDIVIEY (105 aa)) form the KilA-N domain.

The polypeptide is Putative KilA-N domain-containing protein L4 (Acanthamoeba polyphaga mimivirus (APMV)).